Consider the following 258-residue polypeptide: tRNA (guanine-N(7)-)-methyltransferase (258 aa).

S-adenosyl-L-methionine contacts are provided by residues glycine 76, 99 to 100, 132 to 133, and leucine 152; these read EI and NA. The active site involves aspartate 155. 230-232 serves as a coordination point for S-adenosyl-L-methionine; the sequence is TEE.

This sequence belongs to the class I-like SAM-binding methyltransferase superfamily. TrmB family.

It localises to the nucleus. The enzyme catalyses guanosine(46) in tRNA + S-adenosyl-L-methionine = N(7)-methylguanosine(46) in tRNA + S-adenosyl-L-homocysteine. It participates in tRNA modification; N(7)-methylguanine-tRNA biosynthesis. Its function is as follows. Catalyzes the formation of N(7)-methylguanine at position 46 (m7G46) in tRNA. This Brugia malayi (Filarial nematode worm) protein is tRNA (guanine-N(7)-)-methyltransferase.